Consider the following 314-residue polypeptide: (+)-neomenthol dehydrogenase (314 aa).

13–36 (VTGGNKGIGYETCRQLASKGVVVV) serves as a coordination point for NADP(+). Substrate is bound at residue S183. The Proton acceptor role is filled by Y239.

It belongs to the short-chain dehydrogenases/reductases (SDR) family. Monomer. As to expression, expressed in flowers and red fruit tissues. Not detected in leaves, stems, roots or green fruits.

The catalysed reaction is (+)-neomenthol + NADP(+) = (1R,4S)-menthone + NADPH + H(+). Involved in basal resistance against pathogens. This chain is (+)-neomenthol dehydrogenase (MNR1), found in Capsicum annuum (Capsicum pepper).